A 1665-amino-acid polypeptide reads, in one-letter code: Mediator of RNA polymerase II transcription subunit 13 (1665 aa).

Disordered regions lie at residues 411–460 (KETE…IDKN), 482–512 (INLD…ETKP), 551–580 (TVSQ…GTET), and 673–781 (LDSS…NQIS). A compositionally biased stretch (acidic residues) spans 415-445 (PENESENDMEIDDLFGGDESDDNDDLEEAGN). Residues 499 to 512 (VPDKENFKPKETKP) are compositionally biased toward basic and acidic residues. Low complexity predominate over residues 551–568 (TVSQSAVTTNPPSVGSAP). The segment covering 682–720 (EGGEDIEDDDNDYEDEGDDDEEEEGEEEEEEESDEDEIS) has biased composition (acidic residues). The span at 728–762 (LKLNTQNESVPPQQSNYNPVNITDSGSNTTNNITD) shows a compositional bias: polar residues.

This sequence belongs to the Mediator complex subunit 13 family. In terms of assembly, component of the SRB8-11 complex, which itself associates with the Mediator complex.

The protein resides in the nucleus. In terms of biological role, component of the SRB8-11 complex. The SRB8-11 complex is a regulatory module of the Mediator complex which is itself involved in regulation of basal and activated RNA polymerase II-dependent transcription. The SRB8-11 complex may be involved in the transcriptional repression of a subset of genes regulated by Mediator. It may inhibit the association of the Mediator complex with RNA polymerase II to form the holoenzyme complex. The sequence is that of Mediator of RNA polymerase II transcription subunit 13 (SSN2) from Candida albicans (strain SC5314 / ATCC MYA-2876) (Yeast).